Reading from the N-terminus, the 165-residue chain is SsrA-binding protein (165 aa).

The segment covering 1–10 has biased composition (basic residues); it reads MSKKGKKKSK. The interval 1–21 is disordered; sequence MSKKGKKKSKNNSSVDGNRRL.

The protein belongs to the SmpB family.

The protein localises to the cytoplasm. Functionally, required for rescue of stalled ribosomes mediated by trans-translation. Binds to transfer-messenger RNA (tmRNA), required for stable association of tmRNA with ribosomes. tmRNA and SmpB together mimic tRNA shape, replacing the anticodon stem-loop with SmpB. tmRNA is encoded by the ssrA gene; the 2 termini fold to resemble tRNA(Ala) and it encodes a 'tag peptide', a short internal open reading frame. During trans-translation Ala-aminoacylated tmRNA acts like a tRNA, entering the A-site of stalled ribosomes, displacing the stalled mRNA. The ribosome then switches to translate the ORF on the tmRNA; the nascent peptide is terminated with the 'tag peptide' encoded by the tmRNA and targeted for degradation. The ribosome is freed to recommence translation, which seems to be the essential function of trans-translation. The chain is SsrA-binding protein from Prochlorococcus marinus (strain NATL1A).